The chain runs to 70 residues: U-actitoxin-Avd11a (70 aa).

The ShKT domain occupies 36–70; the sequence is CNDYKSSSYCRSVGSRNECGIHKYRMYCRKTCGSC. Disulfide bonds link C36-C70, C45-C63, and C54-C67. The tract at residues 58-59 is crucial for binding to potassium channels; that stretch reads KY.

The protein belongs to the sea anemone type 1 potassium channel toxin family. Type 1b subfamily.

It localises to the secreted. It is found in the nematocyst. Functionally, inhibits voltage-gated potassium channels (Kv1/KCNA). The protein is U-actitoxin-Avd11a of Anemonia viridis (Snakelocks anemone).